The chain runs to 618 residues: Phosphoenolpyruvate carboxykinase [GTP] (618 aa).

Residues R83 and Y217–G219 contribute to the substrate site. Mn(2+) contacts are provided by K226 and H245. Position 267 (S267) interacts with substrate. M268–S273 contacts GTP. The active site involves C269. D286 is a Mn(2+) binding site. N381 to R383 lines the substrate pocket. R383 and R415 together coordinate GTP.

It belongs to the phosphoenolpyruvate carboxykinase [GTP] family. Requires Mn(2+) as cofactor.

It localises to the cytoplasm. It carries out the reaction oxaloacetate + GTP = phosphoenolpyruvate + GDP + CO2. Its pathway is carbohydrate biosynthesis; gluconeogenesis. Functionally, catalyzes the conversion of oxaloacetate (OAA) to phosphoenolpyruvate (PEP), the rate-limiting step in the metabolic pathway that produces glucose from lactate and other precursors derived from the citric acid cycle. The protein is Phosphoenolpyruvate carboxykinase [GTP] of Pyrococcus abyssi (strain GE5 / Orsay).